A 229-amino-acid polypeptide reads, in one-letter code: Large ribosomal subunit protein uL1 (229 aa).

It belongs to the universal ribosomal protein uL1 family. Part of the 50S ribosomal subunit.

In terms of biological role, binds directly to 23S rRNA. The L1 stalk is quite mobile in the ribosome, and is involved in E site tRNA release. Protein L1 is also a translational repressor protein, it controls the translation of the L11 operon by binding to its mRNA. This chain is Large ribosomal subunit protein uL1, found in Magnetococcus marinus (strain ATCC BAA-1437 / JCM 17883 / MC-1).